Reading from the N-terminus, the 594-residue chain is Putative lipase ATG15-1 (594 aa).

At 1–12 (MRRRPLCTSASR) the chain is on the cytoplasmic side. Residues 13-33 (VTASLLLSFLAVSSAAELPIL) traverse the membrane as a helical; Signal-anchor for type II membrane protein segment. The Lumenal segment spans residues 34–594 (PAPPISPQPH…ANHFVYVLHA (561 aa)). N144, N179, N201, N259, and N283 each carry an N-linked (GlcNAc...) asparagine glycan. S299 acts as the Charge relay system in catalysis. Residues N432 and N445 are each glycosylated (N-linked (GlcNAc...) asparagine). Positions 447 to 469 (TETTTTSTSKPTSTSKSSKSNTR) are enriched in low complexity. Disordered stretches follow at residues 447 to 473 (TETT…TRTE) and 489 to 509 (TGTQ…TSTC). N-linked (GlcNAc...) asparagine glycosylation is found at N576 and N582.

This sequence belongs to the AB hydrolase superfamily. Lipase family. As to quaternary structure, binds to both phosphatidylinositol (PI) and phosphatidylinositol 3,5-bisphosphate (PIP2).

It is found in the endosome. The protein localises to the multivesicular body membrane. The protein resides in the prevacuolar compartment membrane. The enzyme catalyses a triacylglycerol + H2O = a diacylglycerol + a fatty acid + H(+). Functionally, lipase which is essential for lysis of subvacuolar cytoplasm to vacuole targeted bodies and intravacuolar autophagic bodies. Involved in the lysis of intravacuolar multivesicular body (MVB) vesicles. The intravacuolar membrane disintegration by ATG15 is critical to life span extension. The sequence is that of Putative lipase ATG15-1 (ATG15-1) from Phaeosphaeria nodorum (strain SN15 / ATCC MYA-4574 / FGSC 10173) (Glume blotch fungus).